Consider the following 246-residue polypeptide: V-type proton ATPase subunit D 1 (246 aa).

It belongs to the V-ATPase D subunit family. As to quaternary structure, V-ATPase is a heteromultimeric enzyme made up of two complexes: the ATP-hydrolytic V1 complex and the proton translocation V0 complex. The V1 complex consists of three catalytic AB heterodimers that form a heterohexamer, three peripheral stalks each consisting of EG heterodimers, one central rotor including subunits D and F, and the regulatory subunits C and H. The proton translocation complex V0 consists of the proton transport subunit a, a ring of proteolipid subunits c9c'', rotary subunit d, subunits e and f, and the accessory subunits VhaAC45 and ATP6AP2.

Subunit of the V1 complex of vacuolar(H+)-ATPase (V-ATPase), a multisubunit enzyme composed of a peripheral complex (V1) that hydrolyzes ATP and a membrane integral complex (V0) that translocates protons. V-ATPase is responsible for acidifying and maintaining the pH of intracellular compartments and in some cell types, is targeted to the plasma membrane, where it is responsible for acidifying the extracellular environment. The chain is V-type proton ATPase subunit D 1 (Vha36-1) from Drosophila melanogaster (Fruit fly).